The primary structure comprises 148 residues: Short form salivary protein D7S1 (148 aa).

The N-terminal stretch at 1–21 is a signal peptide; it reads MKQNVFFLIAYFSLVFCMCNA. Disulfide bonds link Cys28/Cys61, Cys41/Cys147, and Cys103/Cys119.

This sequence belongs to the PBP/GOBP family. Female salivary gland.

It localises to the secreted. Functionally, in contrast to the related D7 salivary proteins that can bind biogenic amines, does not bind serotonin. The sequence is that of Short form salivary protein D7S1 from Aedes aegypti (Yellowfever mosquito).